Consider the following 328-residue polypeptide: MSAVAPEGRPLLRLEARNAQTPIERKPPWIRTRMRTGPEYSDVKGLVRAAGLHTVCEEAGCPNIYECWEDREATFLIGGDVCTRRCDFCQIDSGRPTPLDRDEPRRVAESVRTMGLRYATVTGVARDDLADGGSWLYGETVRQIHALSAGTGVEVLIPDFGGRADQLDEVFGAAPEVLAHNLETVPRIFKRIRPAFRYERSLDVLRQARAAGLVTKSNLILGLGETAEEIHAAMRDLHAAGCELLTVTQYLRPTPRHHPVERWVRPEEFLDWERVGAELGFSGVMSGPLVRSSYRAGRLYQQAITARGEGHTAASDLPKSVLETSHTQ.

[4Fe-4S] cluster-binding residues include Cys-56, Cys-61, Cys-67, Cys-82, Cys-86, Cys-89, and Ser-293. Residues 68-282 form the Radical SAM core domain; the sequence is WEDREATFLI…ERVGAELGFS (215 aa).

It belongs to the radical SAM superfamily. Lipoyl synthase family. Requires [4Fe-4S] cluster as cofactor.

The protein resides in the cytoplasm. The catalysed reaction is [[Fe-S] cluster scaffold protein carrying a second [4Fe-4S](2+) cluster] + N(6)-octanoyl-L-lysyl-[protein] + 2 oxidized [2Fe-2S]-[ferredoxin] + 2 S-adenosyl-L-methionine + 4 H(+) = [[Fe-S] cluster scaffold protein] + N(6)-[(R)-dihydrolipoyl]-L-lysyl-[protein] + 4 Fe(3+) + 2 hydrogen sulfide + 2 5'-deoxyadenosine + 2 L-methionine + 2 reduced [2Fe-2S]-[ferredoxin]. It functions in the pathway protein modification; protein lipoylation via endogenous pathway; protein N(6)-(lipoyl)lysine from octanoyl-[acyl-carrier-protein]: step 2/2. Catalyzes the radical-mediated insertion of two sulfur atoms into the C-6 and C-8 positions of the octanoyl moiety bound to the lipoyl domains of lipoate-dependent enzymes, thereby converting the octanoylated domains into lipoylated derivatives. The protein is Lipoyl synthase of Frankia alni (strain DSM 45986 / CECT 9034 / ACN14a).